Here is a 343-residue protein sequence, read N- to C-terminus: Sodium/bile acid cotransporter 7-B (343 aa).

At 1 to 9 (MGLLERLRK) the chain is on the cytoplasmic side. The chain crosses the membrane as a helical span at residues 10–30 (EWFIIGIILVIVAAKLEPTIG). Over 31 to 37 (EKGGPLK) the chain is Extracellular. A helical membrane pass occupies residues 38–58 (PEITITYIAVSAIFFNSGLSL). The Cytoplasmic portion of the chain corresponds to 59-71 (KTEELTNALMHVK). Residues 72–92 (LHLFVQLFTLVFFPTAIWIFL) form a helical membrane-spanning segment. The Extracellular segment spans residues 93-116 (QVLSLTPINEWLLKGLQTVSCMPP). The helical transmembrane segment at 117–137 (PVSSAVILTKAVGGNEAAAIF) threads the bilayer. Residue N138 is a topological domain, cytoplasmic. The chain crosses the membrane as a helical span at residues 139 to 159 (SAFGSFLGIVVTPLLLLLFLG). Residues 160–163 (SSSS) are Extracellular-facing. A helical membrane pass occupies residues 164–184 (VPFTSIFSQLFMTVVVPLIIG). Over 185 to 201 (QIVRRYIKDWLERKKPP) the chain is Cytoplasmic. A helical transmembrane segment spans residues 202-222 (FGAISSCVLLMIIYTTFCDTF). Over 223–234 (SNPNIDLDTFSL) the chain is Extracellular. A helical transmembrane segment spans residues 235–255 (VVIVFIIFFIQLAFMLLTFLF). At 256 to 270 (STSKNSGFTPADTVA) the chain is on the cytoplasmic side. The chain crosses the membrane as a helical span at residues 271–291 (IVFCSTHKSLTLGIPMLKIVF). At 292 to 298 (AGYEHLS) the chain is on the extracellular side. Residues 299 to 319 (LISVPLLIYHPAQILLGSVLV) traverse the membrane as a helical segment. Residues 320 to 343 (PTIKSWMLSRRKALKLTRQPKIPL) lie on the Cytoplasmic side of the membrane.

It belongs to the bile acid:sodium symporter (BASS) (TC 2.A.28) family.

The protein resides in the cell membrane. Its subcellular location is the endoplasmic reticulum membrane. It is found in the golgi apparatus membrane. Functionally, involved in teeth and skeletal development. Has an essential role in the biosynthesis and trafficking of glycosaminoglycans and glycoproteins to produce a proper functioning extracellular matrix. Required for extracellular matrix mineralization. Also involved in the regulation of cellular calcium homeostasis. Does not show transport activity towards bile acids or steroid sulfates. This Xenopus laevis (African clawed frog) protein is Sodium/bile acid cotransporter 7-B (slc10a7-b).